Reading from the N-terminus, the 453-residue chain is Phosphoglucosamine mutase (453 aa).

The Phosphoserine intermediate role is filled by Ser105. The Mg(2+) site is built by Ser105, Asp244, Asp246, and Asp248. Residue Ser105 is modified to Phosphoserine.

It belongs to the phosphohexose mutase family. It depends on Mg(2+) as a cofactor. Post-translationally, activated by phosphorylation.

It carries out the reaction alpha-D-glucosamine 1-phosphate = D-glucosamine 6-phosphate. In terms of biological role, catalyzes the conversion of glucosamine-6-phosphate to glucosamine-1-phosphate. The polypeptide is Phosphoglucosamine mutase (Chromohalobacter salexigens (strain ATCC BAA-138 / DSM 3043 / CIP 106854 / NCIMB 13768 / 1H11)).